Reading from the N-terminus, the 134-residue chain is UPF0412 protein YaaI (134 aa).

Positions 1-23 (MKSVITISASLAISLMLCCTAQA) are cleaved as a signal peptide.

It belongs to the UPF0412 family.

This chain is UPF0412 protein YaaI, found in Escherichia coli O127:H6 (strain E2348/69 / EPEC).